A 232-amino-acid polypeptide reads, in one-letter code: Orotate phosphoribosyltransferase (232 aa).

5-phospho-alpha-D-ribose 1-diphosphate-binding positions include arginine 107, lysine 108, lysine 111, histidine 113, and glutamate 133–serine 141. Threonine 137 contributes to the orotate binding site.

The protein belongs to the purine/pyrimidine phosphoribosyltransferase family. PyrE subfamily. Homodimer. The cofactor is Mg(2+).

It catalyses the reaction orotidine 5'-phosphate + diphosphate = orotate + 5-phospho-alpha-D-ribose 1-diphosphate. Its pathway is pyrimidine metabolism; UMP biosynthesis via de novo pathway; UMP from orotate: step 1/2. Its function is as follows. Catalyzes the transfer of a ribosyl phosphate group from 5-phosphoribose 1-diphosphate to orotate, leading to the formation of orotidine monophosphate (OMP). This Rhizobium meliloti (strain 1021) (Ensifer meliloti) protein is Orotate phosphoribosyltransferase.